The following is a 279-amino-acid chain: Putative pyruvate, phosphate dikinase regulatory protein (279 aa).

157–164 (GVSRTSKT) is an ADP binding site.

It belongs to the pyruvate, phosphate/water dikinase regulatory protein family. PDRP subfamily.

It catalyses the reaction N(tele)-phospho-L-histidyl/L-threonyl-[pyruvate, phosphate dikinase] + ADP = N(tele)-phospho-L-histidyl/O-phospho-L-threonyl-[pyruvate, phosphate dikinase] + AMP + H(+). It carries out the reaction N(tele)-phospho-L-histidyl/O-phospho-L-threonyl-[pyruvate, phosphate dikinase] + phosphate + H(+) = N(tele)-phospho-L-histidyl/L-threonyl-[pyruvate, phosphate dikinase] + diphosphate. Its function is as follows. Bifunctional serine/threonine kinase and phosphorylase involved in the regulation of the pyruvate, phosphate dikinase (PPDK) by catalyzing its phosphorylation/dephosphorylation. This chain is Putative pyruvate, phosphate dikinase regulatory protein, found in Lactobacillus helveticus (strain DPC 4571).